The primary structure comprises 146 residues: Leptin (146 aa).

Cysteines 96 and 146 form a disulfide.

It belongs to the leptin family.

The protein localises to the secreted. Its function is as follows. Key player in the regulation of energy balance and body weight control. Once released into the circulation, has central and peripheral effects by binding LEPR, found in many tissues, which results in the activation of several major signaling pathways. In the hypothalamus, acts as an appetite-regulating factor that induces a decrease in food intake and an increase in energy consumption by inducing anorexinogenic factors and suppressing orexigenic neuropeptides, also regulates bone mass and secretion of hypothalamo-pituitary-adrenal hormones. In the periphery, increases basal metabolism, influences reproductive function, regulates pancreatic beta-cell function and insulin secretion, is pro-angiogenic for endothelial cell and affects innate and adaptive immunity. In the arcuate nucleus of the hypothalamus, activates by depolarization POMC neurons inducing FOS and SOCS3 expression to release anorexigenic peptides and inhibits by hyperpolarization NPY neurons inducing SOCS3 with a consequent reduction on release of orexigenic peptides. In addition to its known satiety inducing effect, has a modulatory role in nutrient absorption. In the intestine, reduces glucose absorption by enterocytes by activating PKC and leading to a sequential activation of p38, PI3K and ERK signaling pathways which exerts an inhibitory effect on glucose absorption. Acts as a growth factor on certain tissues, through the activation of different signaling pathways increases expression of genes involved in cell cycle regulation such as CCND1, via JAK2-STAT3 pathway, or VEGFA, via MAPK1/3 and PI3K-AKT1 pathways. May also play an apoptotic role via JAK2-STAT3 pathway and up-regulation of BIRC5 expression. Pro-angiogenic, has mitogenic activity on vascular endothelial cells and plays a role in matrix remodeling by regulating the expression of matrix metalloproteinases (MMPs) and tissue inhibitors of metalloproteinases (TIMPs). In innate immunity, modulates the activity and function of neutrophils by increasing chemotaxis and the secretion of oxygen radicals. Increases phagocytosis by macrophages and enhances secretion of pro-inflammatory mediators. Increases cytotoxic ability of NK cells. Plays a pro-inflammatory role, in synergy with IL1B, by inducing NOS2 which promotes the production of IL6, IL8 and Prostaglandin E2, through a signaling pathway that involves JAK2, PI3K, MAP2K1/MEK1 and MAPK14/p38. In adaptive immunity, promotes the switch of memory T-cells towards T helper-1 cell immune responses. Increases CD4(+)CD25(-) T-cell proliferation and reduces autophagy during TCR (T-cell receptor) stimulation, through MTOR signaling pathway activation and BCL2 up-regulation. In Gorilla gorilla gorilla (Western lowland gorilla), this protein is Leptin (LEP).